The following is a 448-amino-acid chain: UDP-N-acetylmuramoylalanine--D-glutamate ligase (448 aa).

116-122 contributes to the ATP binding site; that stretch reads GSNAKST.

The protein belongs to the MurCDEF family.

The protein resides in the cytoplasm. It carries out the reaction UDP-N-acetyl-alpha-D-muramoyl-L-alanine + D-glutamate + ATP = UDP-N-acetyl-alpha-D-muramoyl-L-alanyl-D-glutamate + ADP + phosphate + H(+). Its pathway is cell wall biogenesis; peptidoglycan biosynthesis. Functionally, cell wall formation. Catalyzes the addition of glutamate to the nucleotide precursor UDP-N-acetylmuramoyl-L-alanine (UMA). The polypeptide is UDP-N-acetylmuramoylalanine--D-glutamate ligase (Pseudomonas syringae pv. tomato (strain ATCC BAA-871 / DC3000)).